We begin with the raw amino-acid sequence, 475 residues long: GTPase Der (475 aa).

EngA-type G domains are found at residues 3–167 and 205–380; these read LTIA…GGER and LRIA…RVWN. Residues 9-16, 56-60, 119-122, 211-218, 258-262, and 323-326 each bind GTP; these read GRPNVGKS, DTAGL, NKSE, GRPNTGKS, and NKWD. Residues 381-465 form the KH-like domain; it reads RRISTGKLNR…PIRISLRASD (85 aa).

Belongs to the TRAFAC class TrmE-Era-EngA-EngB-Septin-like GTPase superfamily. EngA (Der) GTPase family. As to quaternary structure, associates with the 50S ribosomal subunit.

Functionally, GTPase that plays an essential role in the late steps of ribosome biogenesis. The polypeptide is GTPase Der (Bartonella henselae (strain ATCC 49882 / DSM 28221 / CCUG 30454 / Houston 1) (Rochalimaea henselae)).